A 65-amino-acid polypeptide reads, in one-letter code: Large ribosomal subunit protein uL29 (65 aa).

The protein belongs to the universal ribosomal protein uL29 family.

This Mycoplasmopsis pulmonis (strain UAB CTIP) (Mycoplasma pulmonis) protein is Large ribosomal subunit protein uL29.